Consider the following 67-residue polypeptide: Cell division protein ZapB (67 aa).

Positions 3-59 form a coiled coil; the sequence is LELLSKLETKIQTALETIELLKMELEEEKQKSIGLAEQNQQLSQDLNSWNEKVTGLV.

This sequence belongs to the ZapB family. As to quaternary structure, homodimer. The ends of the coiled-coil dimer bind to each other, forming polymers. Interacts with FtsZ.

Its subcellular location is the cytoplasm. Its function is as follows. Non-essential, abundant cell division factor that is required for proper Z-ring formation. It is recruited early to the divisome by direct interaction with FtsZ, stimulating Z-ring assembly and thereby promoting cell division earlier in the cell cycle. Its recruitment to the Z-ring requires functional FtsA or ZipA. This is Cell division protein ZapB from Shewanella woodyi (strain ATCC 51908 / MS32).